Here is a 560-residue protein sequence, read N- to C-terminus: Glycolate permease GlcA (560 aa).

The Cytoplasmic segment spans residues 1–13 (MVTWTQMYMPMGG). Residues 14 to 34 (LGLSALVALIPIIFFFVALAV) form a helical membrane-spanning segment. At 35–41 (LRLKGHV) the chain is on the periplasmic side. The helical transmembrane segment at 42–62 (AGAITLILSILIAIFAFKMPI) threads the bilayer. The Cytoplasmic segment spans residues 63 to 69 (DMAFAAA). Residues 70–90 (GYGFIYGLWPIAWIIVAAVFL) traverse the membrane as a helical segment. Topologically, residues 91 to 130 (YKLTVASGQFDIIRSSVISITDDQRLQVLLIGFSFGALLE) are periplasmic. The helical transmembrane segment at 131–151 (GAAGFGAPVAITGALLVGLGF) threads the bilayer. Topologically, residues 152 to 158 (KPLYAAG) are cytoplasmic. Residues 159-179 (LCLIANTAPVAFGALGVPILV) form a helical membrane-spanning segment. At 180–199 (AGQVTGIDPFHIGAMAGRQL) the chain is on the periplasmic side. A helical transmembrane segment spans residues 200–220 (PFLSVLVPFWLVAMMDGWKGV). Residues 221–225 (KETWP) are Cytoplasmic-facing. Residues 226-246 (AALVAGGSFAVTQFFTSNYIG) traverse the membrane as a helical segment. Topologically, residues 247–248 (PE) are periplasmic. Residues 249–269 (LPDITSALVSIVSLALFLKVW) form a helical membrane-spanning segment. The Cytoplasmic segment spans residues 270-313 (RPKNTETAISMGQSAGAMVVNKPSSGGPVPSEYSLGQIIRAWSP). The helical transmembrane segment at 314–334 (FLILTVLVTIWTMKPFKALFA) threads the bilayer. Residues 335–378 (PGGAFYSLVINFQIPHLHQQVLKAAPIVAQPTPMDAVFKFDPLS) lie on the Periplasmic side of the membrane. A helical membrane pass occupies residues 379–399 (AGGTAIFIAAIISIFILGVGI). Residues 400 to 408 (KKGIGVFAE) are Cytoplasmic-facing. Residues 409–429 (TLISLKWPILSIGMVLAFAFV) form a helical membrane-spanning segment. Over 430–438 (TNYSGMSTT) the chain is Periplasmic. Residues 439-459 (LALVLAGTGVMFPFFSPFLGW) form a helical membrane-spanning segment. Topologically, residues 460-536 (LGVFLTGSDT…ELFRYTVKHS (77 aa)) are cytoplasmic. Residues 537–557 (LIFASVIGIITLLQAYVFTGM) form a helical membrane-spanning segment. At 558 to 560 (LVS) the chain is on the periplasmic side.

The protein belongs to the lactate permease family.

The protein localises to the cell inner membrane. It catalyses the reaction glycolate(in) + H(+)(in) = glycolate(out) + H(+)(out). It carries out the reaction (S)-lactate(in) + H(+)(in) = (S)-lactate(out) + H(+)(out). The catalysed reaction is (R)-lactate(in) + H(+)(in) = (R)-lactate(out) + H(+)(out). Inhibited by the proton ionophore carbonyl cyanide m-chlorophenylhydrazone (CCCP). Uptake of glycolate across the membrane. Can also transport L-lactate and D-lactate. Seems to be driven by a proton motive force. The chain is Glycolate permease GlcA from Escherichia coli (strain K12).